The following is a 503-amino-acid chain: Probable cytosol aminopeptidase (503 aa).

Positions 274 and 279 each coordinate Mn(2+). The active site involves Lys-286. Mn(2+) contacts are provided by Asp-297, Asp-356, and Glu-358. Arg-360 is a catalytic residue.

It belongs to the peptidase M17 family. Mn(2+) is required as a cofactor.

The protein localises to the cytoplasm. It carries out the reaction Release of an N-terminal amino acid, Xaa-|-Yaa-, in which Xaa is preferably Leu, but may be other amino acids including Pro although not Arg or Lys, and Yaa may be Pro. Amino acid amides and methyl esters are also readily hydrolyzed, but rates on arylamides are exceedingly low.. The catalysed reaction is Release of an N-terminal amino acid, preferentially leucine, but not glutamic or aspartic acids.. Its function is as follows. Presumably involved in the processing and regular turnover of intracellular proteins. Catalyzes the removal of unsubstituted N-terminal amino acids from various peptides. The sequence is that of Probable cytosol aminopeptidase from Burkholderia thailandensis (strain ATCC 700388 / DSM 13276 / CCUG 48851 / CIP 106301 / E264).